Here is a 317-residue protein sequence, read N- to C-terminus: Toluene-4-sulfonate monooxygenase system reductase subunit TsaB1 (317 aa).

The FAD-binding FR-type domain maps to 2-108; that stretch reads SADVPVTVAA…RATCSEMAPE (107 aa). 110–220 is a binding site for NAD(+); it reads RRVLLLAGGI…PGSVRMERFK (111 aa). The region spanning 230-317 is the 2Fe-2S ferredoxin-type domain; sequence QPFELVLQRA…CGGGRLVLDI (88 aa). Residues cysteine 266, cysteine 271, cysteine 274, and cysteine 304 each contribute to the [2Fe-2S] cluster site.

Monomer. Part of the p-toluenesulfonate methyl-monooxygenase complex TsaBM, comprising the reductase TsaB and the oxygenase TsaM. FMN is required as a cofactor.

Its function is as follows. Iron-sulfur flavoprotein carrying electrons from NADH to the oxygenase TsaM. Involved in the toluene-4-sulfonate degradation pathway. This Comamonas testosteroni (Pseudomonas testosteroni) protein is Toluene-4-sulfonate monooxygenase system reductase subunit TsaB1 (tsaB1).